Consider the following 277-residue polypeptide: Large ribosomal subunit protein uL2 (277 aa).

Disordered regions lie at residues 34–55 (LQPLPKKAGRNNQGKLTVRHHG) and 213–277 (WKGI…RKKK).

It belongs to the universal ribosomal protein uL2 family. As to quaternary structure, part of the 50S ribosomal subunit. Forms a bridge to the 30S subunit in the 70S ribosome.

Its function is as follows. One of the primary rRNA binding proteins. Required for association of the 30S and 50S subunits to form the 70S ribosome, for tRNA binding and peptide bond formation. It has been suggested to have peptidyltransferase activity; this is somewhat controversial. Makes several contacts with the 16S rRNA in the 70S ribosome. This chain is Large ribosomal subunit protein uL2, found in Staphylococcus haemolyticus (strain JCSC1435).